Reading from the N-terminus, the 368-residue chain is Mitochondrial intermembrane space import and assembly protein 40 (368 aa).

A mitochondrion-targeting transit peptide spans 1 to 29 (MYRNTMRSASRPVIASLRSSTIRAAPRRF). The Mitochondrial matrix portion of the chain corresponds to 30 to 47 (ASTAPADKPRSFKGSLVR). Residues 48–65 (LGLAFGAVYYYNTSPIFA) traverse the membrane as a helical; Signal-anchor for type II membrane protein segment. The Mitochondrial intermembrane segment spans residues 66–368 (DEAISKTVPA…AAKKNAEKKQ (303 aa)). A compositionally biased stretch (basic and acidic residues) spans 95-104 (RKQIKAKSEE). The interval 95–144 (RKQIKAKSEETAASSKTPESQQSNPQTAAADGSPAALEEEAGQQGAFNPE) is disordered. Over residues 105–121 (TAASSKTPESQQSNPQT) the composition is skewed to polar residues. Intrachain disulfides connect C152/C154, C163/C196, and C173/C186. Residues 160-204 (DGPCGEEFKTAFSCFVFSQEEPKGMDCIDKFQGMQECFKKYPDIY) form the CHCH domain. 2 consecutive short sequence motifs (cx9C motif) follow at residues 163 to 173 (CGEEFKTAFSC) and 186 to 196 (CIDKFQGMQEC). The segment at 208-310 (LADDEDGAPT…GSRMVQDVAI (103 aa)) is disordered. A compositionally biased stretch (basic and acidic residues) spans 240 to 263 (LARETKDKTAADATKFDDSQKPAE). The span at 264-280 (SKTPAKTTSTSTDSAQK) shows a compositional bias: low complexity. Basic and acidic residues predominate over residues 283-295 (VDAHRDAEPKSDA).

Monomer. Requires Cu(2+) as cofactor. Zn(2+) serves as cofactor.

The protein localises to the mitochondrion inner membrane. Required for the import and folding of small cysteine-containing proteins (small Tim) in the mitochondrial intermembrane space (IMS). Forms a redox cycle with ERV1 that involves a disulfide relay system. Precursor proteins to be imported into the IMS are translocated in their reduced form into the mitochondria. The oxidized form of MIA40 forms a transient intermolecular disulfide bridge with the reduced precursor protein, resulting in oxidation of the precursor protein that now contains an intramolecular disulfide bond and is able to undergo folding in the IMS. The chain is Mitochondrial intermembrane space import and assembly protein 40 (MIA40) from Gibberella zeae (strain ATCC MYA-4620 / CBS 123657 / FGSC 9075 / NRRL 31084 / PH-1) (Wheat head blight fungus).